The following is a 635-amino-acid chain: MAEHELRVLEIPWVEKYRPKRLDDIVDQEHVVERLKAYVNRGDMPNLLFAGPPGTGKTTAALCLARELFGEHWRDNFLELNASVSADTPILVRRGGEVLRVTFEDLDSWYFGDRGGEYVDVSDLEVLTVDRNFRVTWARVSKLIRHRARKILRVHLEDGTIELTGNHAVMVLDEGGLRAVKASEIEEGSFLLSFVAELDEQPTDGGTVVTSVGSGSRVSDTTYELPVEVRVELLRELADDGVIEASEDVSVDLAWLARISGVESRVTDDGVELVWETRTGDLLPADPVLKLVERLESDLVDDLESWVFDGRVSKEAVRKVLSSVDAKNLRGDARRAYRMLRTLVRSDVHAVKVEDLDVMDYDGYVYDVSVPGNEMFFAGEVPVLLHNSDERGIDVIRTKVKNFARTRPMGGARFKIIFLDEADNLTRDSQQALRRIMEMYSDACRFILAANYSSAIIDPIQSRCVVFKFTKLPESAIKERLRKIAESEGVEITEDALDAIVYVSEGDMRRAINVLQAAAALGREIDEDTVFQIAATARPEEVREMIHHAWNGDFERARELLHELLTRYGMSGEDVVRQVHREIFDMDEIPEEAIPELVNAVGDFEYRLIRGSDERIQLEALLARIHALGNEYSGG.

Position 51–58 (51–58 (GPPGTGKT)) interacts with ATP.

It belongs to the activator 1 small subunits family. RfcS subfamily. Heteromultimer composed of small subunits (RfcS) and large subunits (RfcL). This protein undergoes a protein self splicing that involves a post-translational excision of the intervening region (intein) followed by peptide ligation.

In terms of biological role, part of the RFC clamp loader complex which loads the PCNA sliding clamp onto DNA. This is Replication factor C small subunit (rfcS) from Methanopyrus kandleri (strain AV19 / DSM 6324 / JCM 9639 / NBRC 100938).